The primary structure comprises 490 residues: ABC transporter ATP-binding protein ModF (490 aa).

ABC transporter domains follow at residues 4 to 235 (LQIL…AHSE) and 261 to 489 (IVLN…LTKI). ATP-binding positions include 36–43 (GSNGSGKS) and 293–300 (GPNGAGKS).

The protein belongs to the ABC transporter superfamily.

The protein localises to the cell inner membrane. Its function is as follows. Probably not involved in the transport of molybdenum into the cell. The protein is ABC transporter ATP-binding protein ModF (modF) of Escherichia coli (strain K12).